The chain runs to 1026 residues: Multidrug resistance protein MdtC (1026 aa).

11 helical membrane passes run 12-32 (VATTLLTLAIAISGVISFSLL), 333-353 (EVEQSLVIAIGLVILVVFIFL), 360-380 (LIPAVAVPVSLIGSFTAMYLC), 387-407 (LSLMALTIATGFVVDDAIVVL), 431-451 (VGFTVLSMSVSLVAVFIPLLL), 463-483 (FAVTLSVSIGLSLIISLTLTP), 528-548 (WVLAVFLATIALNVWLYVSIP), 853-873 (LLLIAAAIATVYIVLGILYES), 897-917 (LFGAPFSLIALIGIMLLIGIV), 953-973 (PIMMTTLAALFGALPLVLTHG), and 984-1004 (ITIVGGLIVSQLLTLYTTPVV).

The protein belongs to the resistance-nodulation-cell division (RND) (TC 2.A.6) family. MdtC subfamily. As to quaternary structure, part of a tripartite efflux system composed of MdtA, MdtB and MdtC. MdtC forms a heteromultimer with MdtB.

It localises to the cell inner membrane. The polypeptide is Multidrug resistance protein MdtC (Serratia proteamaculans (strain 568)).